We begin with the raw amino-acid sequence, 38 residues long: Large ribosomal subunit protein bL36 (38 aa).

Belongs to the bacterial ribosomal protein bL36 family.

The protein is Large ribosomal subunit protein bL36 of Acholeplasma laidlawii (strain PG-8A).